We begin with the raw amino-acid sequence, 147 residues long: Transthyretin (147 aa).

A signal peptide spans 1–20 (MASHRLLLLCLAGLVFVSEA). Residue C30 is modified to Sulfocysteine. K35 contacts L-thyroxine. The residue at position 62 (E62) is a 4-carboxyglutamate. Position 72 is a phosphoserine (S72). E74 contributes to the L-thyroxine binding site. N118 carries N-linked (GlcNAc...) asparagine glycosylation. S137 contributes to the L-thyroxine binding site.

This sequence belongs to the transthyretin family. In terms of assembly, homotetramer. Dimer of dimers. In the homotetramer, subunits assemble around a central channel that can accommodate two ligand molecules. Interacts with RBP4. Sulfonation of the reactive cysteine Cys-30 enhances the stability of the native conformation of TTR, avoiding misassembly of the protein leading to amyloid formation. Detected in liver.

It localises to the secreted. Thyroid hormone-binding protein. Probably transports thyroxine from the bloodstream to the brain. The protein is Transthyretin (TTR) of Pongo abelii (Sumatran orangutan).